The primary structure comprises 333 residues: Prenyltransferase stbC (333 aa).

8 consecutive transmembrane segments (helical) span residues 74 to 94, 125 to 145, 147 to 164, 173 to 193, 201 to 221, 247 to 267, 272 to 292, and 304 to 324; these read VAFQAVLYIGWTFFMRGAGCA, ANIFGFAMVALAFACISPLPA, CQRLGLMTTVLSIIYPFC, VILGMTLAINFILAAYGAGLP, VPTICVTTAITLLVVFYDVVY, ILLTSITLVIAGLIATTGVLV, YFFVFSVAGLLAALLAMIGGI, and SGWFYALAIFNLLGGYLIEYL.

Belongs to the UbiA prenyltransferase family.

The protein resides in the membrane. The catalysed reaction is orsellinate + (2E,6E)-farnesyl diphosphate = ilicicolinate B + diphosphate. Its pathway is secondary metabolite biosynthesis; terpenoid biosynthesis. In terms of biological role, prenyltransferase; part of the cluster that mediates the biosynthesis of LL-Z1272-beta, also known as ilicicolin B, a prenylated aryl-aldehyde produced by several fungi and that serves as a key pathway intermediate for many fungal meroterpenoids. The first step in the pathway is performed by the non-reducing polyketide synthase stbA that produces orsellinic acid by condensing acetyl-CoA with 3 malonyl-CoA units. The prenyltransferase stbC then prenylates orsenilic acid into grifolic acid. Finally, grifolic acid is reduced to ilicicolin B by the NRPS-like protein stbB. The protein is Prenyltransferase stbC of Stachybotrys bisbyi (Hyalostachybotrys bisbyi).